We begin with the raw amino-acid sequence, 148 residues long: Hydrogenase expression/formation protein HoxO (148 aa).

Residues 128 to 148 (IPVLSPESGTPSCSPMETSES) are disordered. Residues 134-148 (ESGTPSCSPMETSES) are compositionally biased toward polar residues.

Belongs to the HupG/HyaE family.

The protein is Hydrogenase expression/formation protein HoxO (hoxO) of Azotobacter vinelandii.